We begin with the raw amino-acid sequence, 357 residues long: Protein-glutamate methylesterase/protein-glutamine glutaminase 1 (357 aa).

The Response regulatory domain occupies 7 to 124 (KVLCVDDSAL…REGLLDYTQT (118 aa)). A 4-aspartylphosphate modification is found at aspartate 58. Residues 158-350 (LLSTEKLIIV…QRVMAHLATF (193 aa)) form the CheB-type methylesterase domain. Active-site residues include serine 170, histidine 196, and aspartate 292.

This sequence belongs to the CheB family. Phosphorylated by CheA. Phosphorylation of the N-terminal regulatory domain activates the methylesterase activity.

It is found in the cytoplasm. It carries out the reaction [protein]-L-glutamate 5-O-methyl ester + H2O = L-glutamyl-[protein] + methanol + H(+). The enzyme catalyses L-glutaminyl-[protein] + H2O = L-glutamyl-[protein] + NH4(+). Involved in chemotaxis. Part of a chemotaxis signal transduction system that modulates chemotaxis in response to various stimuli. Catalyzes the demethylation of specific methylglutamate residues introduced into the chemoreceptors (methyl-accepting chemotaxis proteins or MCP) by CheR. Also mediates the irreversible deamidation of specific glutamine residues to glutamic acid. The protein is Protein-glutamate methylesterase/protein-glutamine glutaminase 1 of Cupriavidus metallidurans (strain ATCC 43123 / DSM 2839 / NBRC 102507 / CH34) (Ralstonia metallidurans).